The following is a 151-amino-acid chain: Transcriptional repressor NrdR (151 aa).

A zinc finger lies at 3–34 (CPKCGSLNDKVLETRQSKEGVVIKRRRECLNC). Residues 49 to 139 (IEVIKKNNTV…VFDGFEDIKD (91 aa)) form the ATP-cone domain.

Belongs to the NrdR family. Requires Zn(2+) as cofactor.

In terms of biological role, negatively regulates transcription of bacterial ribonucleotide reductase nrd genes and operons by binding to NrdR-boxes. In Sulfurihydrogenibium sp. (strain YO3AOP1), this protein is Transcriptional repressor NrdR.